The sequence spans 131 residues: Profilin (131 aa).

The protein belongs to the profilin family. Occurs in many kinds of cells as a complex with monomeric actin in a 1:1 ratio.

The protein resides in the cytoplasm. It localises to the cytoskeleton. Binds to actin and affects the structure of the cytoskeleton. At high concentrations, profilin prevents the polymerization of actin, whereas it enhances it at low concentrations. By binding to PIP2, it inhibits the formation of IP3 and DG. This chain is Profilin, found in Pyrus communis (Pear).